We begin with the raw amino-acid sequence, 408 residues long: Glutamate N-acetyltransferase (408 aa).

Residues T150, K176, T189, E271, N403, and T408 each contribute to the substrate site. The Nucleophile role is filled by T189.

This sequence belongs to the ArgJ family. Heterotetramer of two alpha and two beta chains.

It is found in the cytoplasm. It catalyses the reaction N(2)-acetyl-L-ornithine + L-glutamate = N-acetyl-L-glutamate + L-ornithine. It functions in the pathway amino-acid biosynthesis; L-arginine biosynthesis; L-ornithine and N-acetyl-L-glutamate from L-glutamate and N(2)-acetyl-L-ornithine (cyclic): step 1/1. In terms of biological role, catalyzes the transfer of the acetyl group from N(2)-acetylornithine to glutamate, forming N-acetylglutamate and L-ornithine. In Methanococcus maripaludis (strain DSM 14266 / JCM 13030 / NBRC 101832 / S2 / LL), this protein is Glutamate N-acetyltransferase.